A 377-amino-acid polypeptide reads, in one-letter code: MGIQGLAKLLGDIAPSGIKENEIKNYFGRKIAIDASMSIYQFLIAVRSDGSQLTNEAGETTSHLMGLFYRTIRMVENGIKPVYVFDGKPPQLKSGELAKRTERREEAQKALSKAEEAGDTENIDKFSRRLVRVTKEHNEECKQLLKLMGIPYVEAPCEAEAQCAALVKSGKVYATGTEDMDALTFGTTVMLRHLTFSEAKKMPIKEFHLQNVLSEAGLSQDEFIDLCILLGCDYCDSIKGIGPKRSVDLIRQHRSIDKILENIDTSKHPPPENWLYKEARELFKNPEVRNPEEIELKWEEPNEEALVTFMCQEKGFSEDRIRSGIKKLTKARHGSTQGRLDSFFKVLPSPANKRKLQDGKGSQNKKAKTGGKFKRPK.

Residues 1-104 (MGIQGLAKLL…GELAKRTERR (104 aa)) form an N-domain region. Asp-34 lines the Mg(2+) pocket. 2 residues coordinate DNA: Arg-47 and Arg-70. Asp-86, Glu-158, Glu-160, Asp-179, and Asp-181 together coordinate Mg(2+). The segment at 122–253 (NIDKFSRRLV…KRSVDLIRQH (132 aa)) is I-domain. DNA is bound at residue Glu-158. Positions 231 and 233 each coordinate DNA. Position 233 (Asp-233) interacts with Mg(2+). The tract at residues 336–344 (TQGRLDSFF) is interaction with PCNA. The segment at 337–377 (QGRLDSFFKVLPSPANKRKLQDGKGSQNKKAKTGGKFKRPK) is disordered. The segment covering 363–377 (QNKKAKTGGKFKRPK) has biased composition (basic residues).

Belongs to the XPG/RAD2 endonuclease family. FEN1 subfamily. Interacts with PCNA. Three molecules of FEN1 bind to one PCNA trimer with each molecule binding to one PCNA monomer. PCNA stimulates the nuclease activity without altering cleavage specificity. Mg(2+) serves as cofactor. Phosphorylated. Phosphorylation upon DNA damage induces relocalization to the nuclear plasma.

The protein resides in the nucleus. It localises to the nucleolus. The protein localises to the nucleoplasm. Its subcellular location is the mitochondrion. Functionally, structure-specific nuclease with 5'-flap endonuclease and 5'-3' exonuclease activities involved in DNA replication and repair. During DNA replication, cleaves the 5'-overhanging flap structure that is generated by displacement synthesis when DNA polymerase encounters the 5'-end of a downstream Okazaki fragment. It enters the flap from the 5'-end and then tracks to cleave the flap base, leaving a nick for ligation. Also involved in the long patch base excision repair (LP-BER) pathway, by cleaving within the apurinic/apyrimidinic (AP) site-terminated flap. Acts as a genome stabilization factor that prevents flaps from equilibrating into structures that lead to duplications and deletions. Also possesses 5'-3' exonuclease activity on nicked or gapped double-stranded DNA, and exhibits RNase H activity. Also involved in replication and repair of rDNA and in repairing mitochondrial DNA. The sequence is that of Flap endonuclease 1 from Nematostella vectensis (Starlet sea anemone).